The following is a 730-amino-acid chain: ATP-dependent DNA helicase Hel308 (730 aa).

ATP is bound by residues Gln28 and 46-53 (IPTASGKT). A Helicase ATP-binding domain is found at 33 to 199 (EKGLLEGKNL…WLDAELVLSE (167 aa)). Residues 144-147 (DEVH) carry the DEAH box motif. A Helicase C-terminal domain is found at 232 to 433 (AVNLVLDTIK…ALRTHILSTI (202 aa)).

The protein belongs to the helicase family. Hel308 subfamily. As to quaternary structure, monomer.

It catalyses the reaction Couples ATP hydrolysis with the unwinding of duplex DNA by translocating in the 3'-5' direction.. The catalysed reaction is ATP + H2O = ADP + phosphate + H(+). Functionally, DNA-dependent ATPase and 3'-5' DNA helicase that may be involved in repair of stalled replication forks. The chain is ATP-dependent DNA helicase Hel308 from Methanosarcina mazei (strain ATCC BAA-159 / DSM 3647 / Goe1 / Go1 / JCM 11833 / OCM 88) (Methanosarcina frisia).